Consider the following 416-residue polypeptide: Calreticulin (416 aa).

Positions 1–25 (MENRGRNPSFLSLLLLLSLFAIASA) are cleaved as a signal peptide. A glycan (N-linked (GlcNAc...) asparagine) is linked at Asn57. Residues Cys111 and Cys143 are joined by a disulfide bond. Tyr115, Lys117, Tyr134, and Asp141 together coordinate an alpha-D-glucoside. The N-linked (GlcNAc...) asparagine glycan is linked to Asn157. Repeat copies occupy residues 197-208 (KQTGSLYTDWDL), 216-227 (DPEAKKPEDWDD), 233-244 (DPEDKKPEGYDD), 251-262 (DPEAKKPEDWDD), 266-276 (GEWTAPTIPNP), 280-290 (GPWKAKKIKNP), and 294-304 (GKWKAPMIDNP). A 4 X approximate repeats region spans residues 197–262 (KQTGSLYTDW…EAKKPEDWDD (66 aa)). The segment covering 217–241 (PEAKKPEDWDDKEFIPDPEDKKPEG) has biased composition (basic and acidic residues). A disordered region spans residues 217–281 (PEAKKPEDWD…TIPNPEYKGP (65 aa)). The segment at 266 to 304 (GEWTAPTIPNPEYKGPWKAKKIKNPNYKGKWKAPMIDNP) is 3 X approximate repeats. Residue Glu324 coordinates an alpha-D-glucoside. Basic and acidic residues predominate over residues 351–381 (EETWGKQKDAEKAAFEELEKKREEEETKDDP). Positions 351-416 (EETWGKQKDA…DKDDDQHDEL (66 aa)) are disordered. The segment covering 382–400 (VESDAEDEDEAEADDSDKD) has biased composition (acidic residues). Positions 401–416 (DADKSDDKDDDQHDEL) are enriched in basic and acidic residues. Positions 413–416 (HDEL) match the Prevents secretion from ER motif.

This sequence belongs to the calreticulin family.

The protein localises to the endoplasmic reticulum lumen. Its function is as follows. Molecular calcium-binding chaperone promoting folding, oligomeric assembly and quality control in the ER via the calreticulin/calnexin cycle. This lectin may interact transiently with almost all of the monoglucosylated glycoproteins that are synthesized in the ER. This chain is Calreticulin, found in Beta vulgaris (Sugar beet).